A 247-amino-acid polypeptide reads, in one-letter code: Probable chemoreceptor glutamine deamidase CheD (247 aa).

The disordered stretch occupies residues 204 to 247; the sequence is KRPAAPQPARPRIELFGGRGTTPGAGSQAAGSPYAANLSRKQEA.

Belongs to the CheD family.

It catalyses the reaction L-glutaminyl-[protein] + H2O = L-glutamyl-[protein] + NH4(+). Functionally, probably deamidates glutamine residues to glutamate on methyl-accepting chemotaxis receptors (MCPs), playing an important role in chemotaxis. The protein is Probable chemoreceptor glutamine deamidase CheD of Burkholderia orbicola (strain MC0-3).